We begin with the raw amino-acid sequence, 585 residues long: uncharacterized protein (585 aa).

This sequence to E.coli YejM.

This is an uncharacterized protein from Haemophilus influenzae (strain ATCC 51907 / DSM 11121 / KW20 / Rd).